Reading from the N-terminus, the 993-residue chain is Vacuolar membrane protease (993 aa).

The Cytoplasmic segment spans residues 1–24; sequence MSPAMANPRVRKFNPIAFTPLPVT. A helical transmembrane segment spans residues 25 to 45; sequence LITTIVYLAVLILVLVTYLVV. At 46-391 the chain is on the vacuolar side; it reads PPAPTLEMSP…SAFAVFRLHT (346 aa). N-linked (GlcNAc...) asparagine glycosylation is found at Asn-59, Asn-116, and Asn-119. Zn(2+) is bound by residues His-175 and Asp-187. Glu-221 serves as the catalytic Proton acceptor. Glu-222 contacts Zn(2+). N-linked (GlcNAc...) asparagine glycosylation is present at Asn-238. 2 residues coordinate Zn(2+): Glu-247 and His-320. Residues 392–412 form a helical membrane-spanning segment; that stretch reads LFALSVTLLVSAPLVLFITSI. Residues 413–447 are Cytoplasmic-facing; the sequence is ALSKTDRMYLFSMSKSLGGTSETVSLRGLRGLFRT. The chain crosses the membrane as a helical span at residues 448–468; that stretch reads PIILTVTTVITIGLAYLLEKI. Residues 469 to 475 are Vacuolar-facing; the sequence is NPYIVHS. The helical transmembrane segment at 476–496 threads the bilayer; sequence SQFAVWSMMLSVWIFVAWFLA. Topologically, residues 497 to 509 are cytoplasmic; the sequence is RVADFFRPSALHR. The helical transmembrane segment at 510–530 threads the bilayer; sequence AYSYTWIFIATWIMLVISTVY. Residues 531-534 are Vacuolar-facing; it reads ANQK. Residues 535 to 555 form a helical membrane-spanning segment; sequence GIAAGYFIFFYFAAVFLATWV. Residues 556–672 lie on the Cytoplasmic side of the membrane; the sequence is SYLELFSLPR…WSWTLPRWTW (117 aa). Residues 579 to 621 form a disordered region; that stretch reads RRSSSLSSRLLTPSADELPSDIGPNGAENLGDPDETDPTESTS. A helical membrane pass occupies residues 673–693; sequence ILQLLLLAPIVIILVGQVGLL. Topologically, residues 694–709 are vacuolar; that stretch reads LTTAMSQIGSDGVSTF. The helical transmembrane segment at 710 to 730 threads the bilayer; it reads IVYLACALLSTLLFAPLFPFI. The Cytoplasmic segment spans residues 731–737; that stretch reads HRFTYHV. Residues 738–758 form a helical membrane-spanning segment; that stretch reads PTFLLLIFIGTLIYNLVAFPF. Residues 759–993 are Vacuolar-facing; that stretch reads SPANRLKIFF…VEASHDFIIQ (235 aa). Residues Asn-806, Asn-847, and Asn-955 are each glycosylated (N-linked (GlcNAc...) asparagine).

The protein belongs to the peptidase M28 family. Requires Zn(2+) as cofactor.

It is found in the vacuole membrane. Functionally, may be involved in vacuolar sorting and osmoregulation. In Paracoccidioides lutzii (strain ATCC MYA-826 / Pb01) (Paracoccidioides brasiliensis), this protein is Vacuolar membrane protease.